A 98-amino-acid chain; its full sequence is Large ribosomal subunit protein eL14 (98 aa).

This sequence belongs to the eukaryotic ribosomal protein eL14 family.

This Thermofilum pendens (strain DSM 2475 / Hrk 5) protein is Large ribosomal subunit protein eL14.